The sequence spans 382 residues: 3-hydroxyisobutyryl-CoA hydrolase, mitochondrial (382 aa).

Glu117, Gly142, Glu165, and Asp173 together coordinate substrate.

This sequence belongs to the enoyl-CoA hydratase/isomerase family.

The protein localises to the mitochondrion. It catalyses the reaction 3-hydroxy-2-methylpropanoyl-CoA + H2O = 3-hydroxy-2-methylpropanoate + CoA + H(+). It participates in amino-acid degradation; L-valine degradation. Hydrolyzes 3-hydroxyisobutyryl-CoA (HIBYL-CoA), a saline catabolite. Has high activity toward isobutyryl-CoA. Could be an isobutyryl-CoA dehydrogenase that functions in valine catabolism. Also hydrolyzes 3-hydroxypropanoyl-CoA. This Danio rerio (Zebrafish) protein is 3-hydroxyisobutyryl-CoA hydrolase, mitochondrial (hibch).